Reading from the N-terminus, the 200-residue chain is Protein Syd (200 aa).

This sequence belongs to the Syd family.

The protein localises to the cell inner membrane. Its function is as follows. Interacts with the SecY protein in vivo. May bind preferentially to an uncomplexed state of SecY, thus functioning either as a chelating agent for excess SecY in the cell or as a regulatory factor that negatively controls the translocase function. In Colwellia psychrerythraea (strain 34H / ATCC BAA-681) (Vibrio psychroerythus), this protein is Protein Syd.